The primary structure comprises 573 residues: ESX-1 secretion system protein EccA1 (573 aa).

ATP is bound at residue G334–T341.

This sequence belongs to the CbxX/CfxQ family. Part of the ESX-1 / type VII secretion system (T7SS), which is composed of cytosolic and membrane components.

It is found in the cytoplasm. Its function is as follows. Part of the ESX-1 specialized secretion system, which delivers several virulence factors to host cells during infection, including the key virulence factors EsxA (ESAT-6) and EsxB (CFP-10). EccA1 exhibits ATPase activity and may provide energy for the export of ESX-1 substrates. The protein is ESX-1 secretion system protein EccA1 of Mycobacterium tuberculosis (strain CDC 1551 / Oshkosh).